The following is a 431-amino-acid chain: L-lysine N6-monooxygenase MbtG (431 aa).

An N-terminal signal peptide occupies residues 1 to 21 (MNPTLAVLGAGAKAVAVAAKA).

It belongs to the lysine N(6)-hydroxylase/L-ornithine N(5)-oxygenase family. It depends on FAD as a cofactor.

The enzyme catalyses L-lysine + NADPH + O2 = N(6)-hydroxy-L-lysine + NADP(+) + H2O. It participates in siderophore biosynthesis; mycobactin biosynthesis. In terms of biological role, flavoprotein monooxygenase required for N-hydroxylation of the two acylated lysine residues during mycobactin assembly, thus producing the hydroxamate groups necessary for iron sequestration. Is also able, but less efficiently, to hydroxylate L-lysine (non acylated) in vitro. This chain is L-lysine N6-monooxygenase MbtG (mbtG), found in Mycobacterium bovis (strain ATCC BAA-935 / AF2122/97).